The following is a 244-amino-acid chain: UPF0173 metal-dependent hydrolase Rcas_3617 (244 aa).

Belongs to the UPF0173 family.

The sequence is that of UPF0173 metal-dependent hydrolase Rcas_3617 from Roseiflexus castenholzii (strain DSM 13941 / HLO8).